The following is a 564-amino-acid chain: Rhotekin (564 aa).

Arg-14 carries the omega-N-methylarginine modification. Positions 17–98 constitute an REM-1 domain; that stretch reads ALEMEFKRGR…LQRRKEAQVL (82 aa). Phosphoserine is present on residues Ser-30 and Ser-106. An Asymmetric dimethylarginine modification is found at Arg-230. Position 232 is a phosphoserine (Ser-232). The region spanning 309 to 416 is the PH domain; that stretch reads QPTASGALRV…WMEALWQLFF (108 aa). Positions 518–564 are disordered; the sequence is TFSLDAAPADHSLGPSRSVAPLPPQRSPKSRGFYSKSQLGPWLQSPV. Residues Ser-520, Ser-529, and Ser-544 each carry the phosphoserine modification.

As to quaternary structure, interacts via its C-terminal region with the TAX1BP3 PDZ domain. This interaction facilitates Rho-mediated activation of the c-Fos serum response element (SRE). Interacts with SEPT9. Specifically binds to GTP-bound RHOA, RHOB and RHOC and inhibits their GTPase activity. Abundantly expressed in brain and kidney. Weakly expressed in lung, testis, skeletal muscle, heart and thymus.

Mediates Rho signaling to activate NF-kappa-B and may confer increased resistance to apoptosis to cells in gastric tumorigenesis. May play a novel role in the organization of septin structures. This Mus musculus (Mouse) protein is Rhotekin.